The chain runs to 548 residues: Synaptic vesicle 2-related protein (548 aa).

Over 1-87 the chain is Cytoplasmic; that stretch reads MEEDLFQLRQ…GFGKFQWKLS (87 aa). 2 positions are modified to phosphoserine: serine 25 and serine 31. A helical membrane pass occupies residues 88-108; sequence VLTGLAWMADAMEMMILSILA. At 109 to 122 the chain is on the vesicular side; the sequence is PQLHCEWRLPSWQV. A helical membrane pass occupies residues 123–143; that stretch reads ALLTSVVFVGMMSSSTLWGNI. The Cytoplasmic portion of the chain corresponds to 144-156; it reads SDQYGRKTGLKIS. A helical transmembrane segment spans residues 157 to 177; the sequence is VLWTLYYGILSAFAPVYSWIL. The Vesicular portion of the chain corresponds to 178–180; that stretch reads VLR. A helical membrane pass occupies residues 181–201; it reads GLVGFGIGGVPQSVTLYAEFL. Over 202–209 the chain is Cytoplasmic; the sequence is PMKARAKC. Residues 210-230 form a helical membrane-spanning segment; sequence ILLIEVFWAIGTVFEVVLAVF. The Vesicular portion of the chain corresponds to 231 to 238; that stretch reads VMPSLGWR. The helical transmembrane segment at 239 to 259 threads the bilayer; that stretch reads WLLILSAVPLLLFAVLCFWLP. Topologically, residues 260-316 are cytoplasmic; sequence ESARYDVLSGNQEKAIATLKRIATENGAPMPLGKLIISRQEDRGKMRDLFTPHFRWT. Residues 317–337 traverse the membrane as a helical segment; it reads TLLLWFIWFSNAFSYYGLVLL. The Vesicular portion of the chain corresponds to 338 to 373; it reads TTELFQAGDVCSISSRKKAVEAKCSLACEYLSEEDY. A helical transmembrane segment spans residues 374–394; sequence MDLLWTTLSEFPGVLVTLWII. Over 395–401 the chain is Cytoplasmic; it reads DRLGRKK. The helical transmembrane segment at 402–422 threads the bilayer; sequence TMALCFVVFSFCSLLLFICVG. Over 423 to 425 the chain is Vesicular; the sequence is RNM. Residues 426-446 traverse the membrane as a helical segment; the sequence is LTLLLFIARAFISGGFQAAYV. At 447–457 the chain is on the cytoplasmic side; the sequence is YTPEVYPTATR. The helical transmembrane segment at 458 to 478 threads the bilayer; it reads ALGLGTCSGMARVGALITPFI. The Vesicular portion of the chain corresponds to 479-489; it reads AQVMLESSVYL. Residues 490–510 traverse the membrane as a helical segment; sequence TLAVYSGCCLLAALASCFLPI. At 511–548 the chain is on the cytoplasmic side; the sequence is ETKGRGLQESSHREWGQEMVGRGAHGTGVARSNSGSQE. Residues 528 to 548 form a disordered region; the sequence is EMVGRGAHGTGVARSNSGSQE. Serine 542 carries the post-translational modification Phosphoserine.

The protein belongs to the major facilitator superfamily. As to expression, detected in brain and adrenal medulla.

Its subcellular location is the cytoplasmic vesicle. The protein resides in the secretory vesicle. The protein localises to the synaptic vesicle membrane. The polypeptide is Synaptic vesicle 2-related protein (SVOP) (Bos taurus (Bovine)).